Consider the following 829-residue polypeptide: Leucine--tRNA ligase (829 aa).

The 'HIGH' region signature appears at 42 to 52 (PYPSGNLHMGH). Positions 582–586 (KMSKS) match the 'KMSKS' region motif. Residue Lys585 participates in ATP binding.

It belongs to the class-I aminoacyl-tRNA synthetase family.

The protein localises to the cytoplasm. The enzyme catalyses tRNA(Leu) + L-leucine + ATP = L-leucyl-tRNA(Leu) + AMP + diphosphate. The sequence is that of Leucine--tRNA ligase from Moorella thermoacetica (strain ATCC 39073 / JCM 9320).